We begin with the raw amino-acid sequence, 126 residues long: Large-conductance mechanosensitive channel (126 aa).

Helical transmembrane passes span 8 to 28 (FAMR…AAFT) and 70 to 90 (IQQI…VKVI).

This sequence belongs to the MscL family. Homopentamer.

Its subcellular location is the cell membrane. Its function is as follows. Channel that opens in response to stretch forces in the membrane lipid bilayer. May participate in the regulation of osmotic pressure changes within the cell. The polypeptide is Large-conductance mechanosensitive channel (Exiguobacterium sp. (strain ATCC BAA-1283 / AT1b)).